A 249-amino-acid polypeptide reads, in one-letter code: Long form salivary protein D7L (249 aa).

The signal sequence occupies residues Met1–Ser19. 2 disulfides stabilise this stretch: Cys36–Cys66 and Cys62–Cys112. Trp49 lines the thromboxane A2 pocket. A leukotriene C4-binding site is contributed by Trp52. A thromboxane A2-binding site is contributed by Tyr63. Leukotriene C4 contacts are provided by Gly136 and Lys154. Lys154 is a thromboxane A2 binding site. Intrachain disulfides connect Cys162–Cys178, Cys174–Cys221, and Cys211–Cys230.

The protein belongs to the PBP/GOBP family.

It is found in the secreted. Its function is as follows. Modulates blood feeding of female sandflies on vertebrate species by binding and sequestering different mediators involved in the host response. Binds leukotriene C4, leukotriene D4, leukotriene E4 and U-46619, a stable analog of thromboxane A2. Does not bind histamine or serotonin. Inhibits platelet aggregation induced by low concentrations of collagen in thromboxane A2-dependent manner. The chain is Long form salivary protein D7L from Phlebotomus duboscqi (Sandfly).